Reading from the N-terminus, the 392-residue chain is UPF0229 protein CPF_1540 (392 aa).

The disordered stretch occupies residues 75-100 (VTTGTGEERRGDRISSDKRKAISNNK). The span at 80-94 (GEERRGDRISSDKRK) shows a compositional bias: basic and acidic residues.

Belongs to the UPF0229 family.

The protein is UPF0229 protein CPF_1540 of Clostridium perfringens (strain ATCC 13124 / DSM 756 / JCM 1290 / NCIMB 6125 / NCTC 8237 / Type A).